We begin with the raw amino-acid sequence, 169 residues long: Peptide methionine sulfoxide reductase MsrA (169 aa).

Cysteine 10 is an active-site residue.

This sequence belongs to the MsrA Met sulfoxide reductase family.

It catalyses the reaction L-methionyl-[protein] + [thioredoxin]-disulfide + H2O = L-methionyl-(S)-S-oxide-[protein] + [thioredoxin]-dithiol. The enzyme catalyses [thioredoxin]-disulfide + L-methionine + H2O = L-methionine (S)-S-oxide + [thioredoxin]-dithiol. Functionally, has an important function as a repair enzyme for proteins that have been inactivated by oxidation. Catalyzes the reversible oxidation-reduction of methionine sulfoxide in proteins to methionine. The protein is Peptide methionine sulfoxide reductase MsrA of Streptococcus agalactiae serotype Ia (strain ATCC 27591 / A909 / CDC SS700).